The sequence spans 504 residues: Maturase K (504 aa).

This sequence belongs to the intron maturase 2 family. MatK subfamily.

The protein localises to the plastid. The protein resides in the chloroplast. Its function is as follows. Usually encoded in the trnK tRNA gene intron. Probably assists in splicing its own and other chloroplast group II introns. The sequence is that of Maturase K from Pseudoturritis turrita (Tower rock-cress).